The following is a 228-amino-acid chain: Cytochrome c oxidase subunit 2 (228 aa).

Topologically, residues 1 to 26 (MRTWSNFNLQNSASPLMEQIIFFHDH) are mitochondrial intermembrane. A helical membrane pass occupies residues 27–48 (TLIILIMITILVGYIMINLFFN). Residues 49 to 62 (KFINRFFLVGQMIE) lie on the Mitochondrial matrix side of the membrane. Residues 63–82 (LIWTVLPAITLIFIALPSLR) form a helical membrane-spanning segment. Residues 83–228 (LLYLLDELNN…FINWINNYSY (146 aa)) lie on the Mitochondrial intermembrane side of the membrane. Cu cation contacts are provided by His-161, Cys-196, Glu-198, Cys-200, His-204, and Met-207. Residue Glu-198 participates in Mg(2+) binding.

This sequence belongs to the cytochrome c oxidase subunit 2 family. Component of the cytochrome c oxidase (complex IV, CIV), a multisubunit enzyme composed of a catalytic core of 3 subunits and several supernumerary subunits. The complex exists as a monomer or a dimer and forms supercomplexes (SCs) in the inner mitochondrial membrane with ubiquinol-cytochrome c oxidoreductase (cytochrome b-c1 complex, complex III, CIII). The cofactor is Cu cation.

The protein localises to the mitochondrion inner membrane. The enzyme catalyses 4 Fe(II)-[cytochrome c] + O2 + 8 H(+)(in) = 4 Fe(III)-[cytochrome c] + 2 H2O + 4 H(+)(out). In terms of biological role, component of the cytochrome c oxidase, the last enzyme in the mitochondrial electron transport chain which drives oxidative phosphorylation. The respiratory chain contains 3 multisubunit complexes succinate dehydrogenase (complex II, CII), ubiquinol-cytochrome c oxidoreductase (cytochrome b-c1 complex, complex III, CIII) and cytochrome c oxidase (complex IV, CIV), that cooperate to transfer electrons derived from NADH and succinate to molecular oxygen, creating an electrochemical gradient over the inner membrane that drives transmembrane transport and the ATP synthase. Cytochrome c oxidase is the component of the respiratory chain that catalyzes the reduction of oxygen to water. Electrons originating from reduced cytochrome c in the intermembrane space (IMS) are transferred via the dinuclear copper A center (CU(A)) of subunit 2 and heme A of subunit 1 to the active site in subunit 1, a binuclear center (BNC) formed by heme A3 and copper B (CU(B)). The BNC reduces molecular oxygen to 2 water molecules using 4 electrons from cytochrome c in the IMS and 4 protons from the mitochondrial matrix. In Galleria mellonella (Greater wax moth), this protein is Cytochrome c oxidase subunit 2 (COII).